A 165-amino-acid chain; its full sequence is Phosphopantetheine adenylyltransferase (165 aa).

Residue serine 10 participates in substrate binding. ATP is bound by residues 10 to 11 (SF) and histidine 18. Substrate contacts are provided by lysine 42, threonine 79, and arginine 93. Residues 94 to 96 (GLR), glutamate 104, and 129 to 135 (VRPITAT) each bind ATP.

It belongs to the bacterial CoaD family. Homohexamer. Mg(2+) is required as a cofactor.

It is found in the cytoplasm. It catalyses the reaction (R)-4'-phosphopantetheine + ATP + H(+) = 3'-dephospho-CoA + diphosphate. It participates in cofactor biosynthesis; coenzyme A biosynthesis; CoA from (R)-pantothenate: step 4/5. Its function is as follows. Reversibly transfers an adenylyl group from ATP to 4'-phosphopantetheine, yielding dephospho-CoA (dPCoA) and pyrophosphate. The polypeptide is Phosphopantetheine adenylyltransferase (Afipia carboxidovorans (strain ATCC 49405 / DSM 1227 / KCTC 32145 / OM5) (Oligotropha carboxidovorans)).